A 170-amino-acid chain; its full sequence is Xanthine-guanine phosphoribosyltransferase (170 aa).

5-phospho-alpha-D-ribose 1-diphosphate-binding positions include 41–42 and 98–106; these read RG and DDLTDTGKT. Residue Asp99 coordinates Mg(2+). Asp102 is a binding site for guanine. Residue Asp102 coordinates xanthine. 102–106 provides a ligand contact to GMP; that stretch reads DTGKT.

Belongs to the purine/pyrimidine phosphoribosyltransferase family. XGPT subfamily. In terms of assembly, homotetramer. Mg(2+) is required as a cofactor.

The protein resides in the cell inner membrane. It catalyses the reaction GMP + diphosphate = guanine + 5-phospho-alpha-D-ribose 1-diphosphate. The catalysed reaction is XMP + diphosphate = xanthine + 5-phospho-alpha-D-ribose 1-diphosphate. It carries out the reaction IMP + diphosphate = hypoxanthine + 5-phospho-alpha-D-ribose 1-diphosphate. The protein operates within purine metabolism; GMP biosynthesis via salvage pathway; GMP from guanine: step 1/1. It functions in the pathway purine metabolism; XMP biosynthesis via salvage pathway; XMP from xanthine: step 1/1. Functionally, purine salvage pathway enzyme that catalyzes the transfer of the ribosyl-5-phosphate group from 5-phospho-alpha-D-ribose 1-diphosphate (PRPP) to the N9 position of the 6-oxopurines guanine and xanthine to form the corresponding ribonucleotides GMP (guanosine 5'-monophosphate) and XMP (xanthosine 5'-monophosphate), with the release of PPi. To a lesser extent, also acts on hypoxanthine. This is Xanthine-guanine phosphoribosyltransferase from Brucella abortus (strain 2308).